Consider the following 608-residue polypeptide: DNA mismatch repair protein MutL (608 aa).

A disordered region spans residues 363–397; the sequence is ASLAMARKPDPPRFHETARPQPDPRHTPGTESVSV. A compositionally biased stretch (basic and acidic residues) spans 369-390; sequence RKPDPPRFHETARPQPDPRHTP.

The protein belongs to the DNA mismatch repair MutL/HexB family.

This protein is involved in the repair of mismatches in DNA. It is required for dam-dependent methyl-directed DNA mismatch repair. May act as a 'molecular matchmaker', a protein that promotes the formation of a stable complex between two or more DNA-binding proteins in an ATP-dependent manner without itself being part of a final effector complex. This chain is DNA mismatch repair protein MutL, found in Pelobacter propionicus (strain DSM 2379 / NBRC 103807 / OttBd1).